The chain runs to 425 residues: Beta-1,4-galactosyltransferase galt-1 (425 aa).

Topologically, residues 1–8 (MPRITASK) are cytoplasmic. Residues 9–29 (IVLLIALSFCITVIYHFPIAT) traverse the membrane as a helical; Signal-anchor for type II membrane protein segment. The Lumenal portion of the chain corresponds to 30–425 (RSSKEYDEYG…FDSVVGLLDL (396 aa)). N-linked (GlcNAc...) asparagine glycosylation is found at Asn-109 and Asn-152. Positions 189-394 (KMSICVPALF…LLRVYHYKDK (206 aa)) constitute a GT92 domain.

It belongs to the glycosyltransferase 92 family. Requires Mn(2+) as cofactor. N-glycosylated. In terms of tissue distribution, expressed in intestine and coelomocytes.

The protein localises to the golgi apparatus. It localises to the golgi stack membrane. With respect to regulation, inhibited by EDTA, Cu(2+) and Zn(2+). Catalyzes the transfer of beta-galactose from UDP-galactose to position 4 of alpha-1,6-linked fucose at the reducing end GlcNAc in N-glycan cores. Involved in susceptibility to the nematotoxic C.cinerea galectin Cgl2, likely by contributing to the synthesis of core alpha-1,6-fucosylated N-glycans to which Cgl2 binds. This is Beta-1,4-galactosyltransferase galt-1 from Caenorhabditis elegans.